The sequence spans 154 residues: Large ribosomal subunit protein uL13 (154 aa).

It belongs to the universal ribosomal protein uL13 family. As to quaternary structure, part of the 50S ribosomal subunit.

Functionally, this protein is one of the early assembly proteins of the 50S ribosomal subunit, although it is not seen to bind rRNA by itself. It is important during the early stages of 50S assembly. This is Large ribosomal subunit protein uL13 from Rhizobium meliloti (strain 1021) (Ensifer meliloti).